The following is a 512-amino-acid chain: Cytochrome P450 26B1 (512 aa).

Cysteine 441 is a heme binding site.

Belongs to the cytochrome P450 family. It depends on heme as a cofactor. As to expression, highly expressed in brain, particularly in the cerebellum and pons.

It localises to the endoplasmic reticulum membrane. The protein resides in the microsome membrane. It catalyses the reaction all-trans-retinoate + reduced [NADPH--hemoprotein reductase] + O2 = all-trans-4-hydroxyretinoate + oxidized [NADPH--hemoprotein reductase] + H2O + H(+). The catalysed reaction is all-trans-retinoate + reduced [NADPH--hemoprotein reductase] + O2 = all-trans-18-hydroxyretinoate + oxidized [NADPH--hemoprotein reductase] + H2O + H(+). Functionally, a cytochrome P450 monooxygenase involved in the metabolism of retinoates (RAs), the active metabolites of vitamin A, and critical signaling molecules in animals. RAs exist as at least four different isomers: all-trans-RA (atRA), 9-cis-RA, 13-cis-RA, and 9,13-dicis-RA, where atRA is considered to be the biologically active isomer, although 9-cis-RA and 13-cis-RA also have activity. Catalyzes the hydroxylation of atRA primarily at C-4 and C-18, thereby contributing to the regulation of atRA homeostasis and signaling. Hydroxylation of atRA limits its biological activity and initiates a degradative process leading to its eventual elimination. Involved in the convertion of atRA to all-trans-4-oxo-RA. Can oxidize all-trans-13,14-dihydroretinoate (DRA) to metabolites which could include all-trans-4-oxo-DRA, all-trans-4-hydroxy-DRA, all-trans-5,8-epoxy-DRA, and all-trans-18-hydroxy-DRA. Shows preference for the following substrates: atRA &gt; 9-cis-RA &gt; 13-cis-RA. Plays a central role in germ cell development: acts by degrading RAs in the developing testis, preventing STRA8 expression, thereby leading to delay of meiosis. Required for the maintenance of the undifferentiated state of male germ cells during embryonic development in Sertoli cells, inducing arrest in G0 phase of the cell cycle and preventing meiotic entry. Plays a role in skeletal development, both at the level of patterning and in the ossification of bone and the establishment of some synovial joints. Essential for postnatal survival. In terms of biological role, also has a significant activity in oxidation of tazarotenic acid and may therefore metabolize that xenobiotic in vivo. In Homo sapiens (Human), this protein is Cytochrome P450 26B1 (CYP26B1).